The following is a 509-amino-acid chain: Angiopoietin-4 (509 aa).

An N-terminal signal peptide occupies residues 1–21; that stretch reads MLCQPAMLLDGLLLLATMAAA. N-linked (GlcNAc...) asparagine glycans are attached at residues N105, N135, N149, N167, N256, N306, N317, and N417. Positions 181 to 269 form a coiled coil; the sequence is LSTNKLERQM…LQQQQQQLTE (89 aa). The Fibrinogen C-terminal domain maps to 288-508; the sequence is KTPKPVFQDC…GTRMMLRPMG (221 aa). An intrachain disulfide couples C297 to C326. The segment at 416–436 is disordered; that stretch reads VNDSSSSAGRKNSLAPQGTKF. A disulfide bond links C450 and C463.

Homodimer; disulfide-linked. Interacts with TEK/TIE2. In terms of tissue distribution, widely expressed.

It localises to the secreted. In terms of biological role, binds to TEK/TIE2, modulating ANGPT1 signaling. Can induce tyrosine phosphorylation of TEK/TIE2. Promotes endothelial cell survival, migration and angiogenesis. The chain is Angiopoietin-4 (Angpt4) from Mus musculus (Mouse).